Reading from the N-terminus, the 630-residue chain is tRNA uridine 5-carboxymethylaminomethyl modification enzyme MnmG (630 aa).

13–18 (GGGHAG) is a binding site for FAD. Position 273 to 287 (273 to 287 (GPRYCPSIEDKIHRF)) interacts with NAD(+).

Belongs to the MnmG family. As to quaternary structure, homodimer. Heterotetramer of two MnmE and two MnmG subunits. FAD serves as cofactor.

It is found in the cytoplasm. In terms of biological role, NAD-binding protein involved in the addition of a carboxymethylaminomethyl (cmnm) group at the wobble position (U34) of certain tRNAs, forming tRNA-cmnm(5)s(2)U34. The polypeptide is tRNA uridine 5-carboxymethylaminomethyl modification enzyme MnmG (Pseudomonas putida (strain ATCC 700007 / DSM 6899 / JCM 31910 / BCRC 17059 / LMG 24140 / F1)).